Consider the following 147-residue polypeptide: Hemoglobin subunit gamma-1 (147 aa).

The 145-residue stretch at 3–147 (NFTAEDKAAI…VASALGSRYH (145 aa)) folds into the Globin domain. T13 is modified (phosphothreonine). S45, S51, and S53 each carry phosphoserine. K60 carries the N6-acetyllysine modification. Heme b is bound at residue H64. K83 is modified (N6-acetyllysine). H93 provides a ligand contact to heme b. Position 94 is an S-nitrosocysteine (C94). S140 carries the phosphoserine modification.

The protein belongs to the globin family. In terms of assembly, heterotetramer of two alpha chains and two gamma chains in fetal hemoglobin (Hb F). As to expression, red blood cells.

Gamma chains make up the fetal hemoglobin F, in combination with alpha chains. The chain is Hemoglobin subunit gamma-1 (HBG1) from Sapajus apella (Brown-capped capuchin).